A 268-amino-acid polypeptide reads, in one-letter code: uncharacterized protein (268 aa).

This sequence to yeast YKR075c.

This is an uncharacterized protein from Saccharomyces cerevisiae (strain ATCC 204508 / S288c) (Baker's yeast).